Reading from the N-terminus, the 316-residue chain is Olfactory receptor 1165 (316 aa).

Residues 1-28 (MMLDLGNESSVTMFILSGFSEYPHLHAP) are Extracellular-facing. A glycan (N-linked (GlcNAc...) asparagine) is linked at Asn7. A helical membrane pass occupies residues 29-50 (LFLLFFMIYTVTLIGNLGIIVV). Topologically, residues 51-61 (RKVNPKLHTPM) are cytoplasmic. A helical transmembrane segment spans residues 62-80 (YFFLSHLSFLDICYSSVFT). Residues 81–99 (PKLLEILIVEDRTISFKGC) are Extracellular-facing. A disulfide bridge connects residues Cys99 and Cys181. A helical membrane pass occupies residues 100 to 122 (MTQFFLICAFVITEMFMLAVMAY). Residues 123–141 (DRFVAVCNPLLYTVSMSPK) lie on the Cytoplasmic side of the membrane. A helical membrane pass occupies residues 142–166 (LCAFLVAGTYMWGVLCSLTITYSLL). Over 167–205 (QLSYCGPNIINHFGCEYSAILSLSCSDPTFSQVVCLTIS) the chain is Extracellular. Residues 206–228 (IFNETCSLLIILASYVFIVVTII) form a helical membrane-spanning segment. The Cytoplasmic portion of the chain corresponds to 229–239 (KMPSKGGLQKA). The chain crosses the membrane as a helical span at residues 240–263 (FSTCSSHLTAISIFHGIILLLYCV). Over 264 to 268 (PNSKN) the chain is Extracellular. Residues 269–291 (SWLVVKVATVLFTVMIPMLNPLI) form a helical membrane-spanning segment. Over 292-316 (YSLRNKDVKGTVSRLMHLKLQAHST) the chain is Cytoplasmic.

The protein belongs to the G-protein coupled receptor 1 family.

The protein resides in the cell membrane. In terms of biological role, olfactory receptor. This Mus musculus (Mouse) protein is Olfactory receptor 1165.